The chain runs to 171 residues: NADH-quinone oxidoreductase subunit I (171 aa).

2 4Fe-4S ferredoxin-type domains span residues 63–92 (RRYENGEERCIACKLCEAVCPALAITIESD) and 102–131 (TRYDIDLTKCIFCGFCEESCPVDSIVETQI). Residues Cys72, Cys75, Cys78, Cys82, Cys111, Cys114, Cys117, and Cys121 each coordinate [4Fe-4S] cluster.

This sequence belongs to the complex I 23 kDa subunit family. In terms of assembly, NDH-1 is composed of 14 different subunits. Subunits NuoA, H, J, K, L, M, N constitute the membrane sector of the complex. [4Fe-4S] cluster is required as a cofactor.

Its subcellular location is the cell inner membrane. It catalyses the reaction a quinone + NADH + 5 H(+)(in) = a quinol + NAD(+) + 4 H(+)(out). NDH-1 shuttles electrons from NADH, via FMN and iron-sulfur (Fe-S) centers, to quinones in the respiratory chain. The immediate electron acceptor for the enzyme in this species is believed to be ubiquinone. Couples the redox reaction to proton translocation (for every two electrons transferred, four hydrogen ions are translocated across the cytoplasmic membrane), and thus conserves the redox energy in a proton gradient. The sequence is that of NADH-quinone oxidoreductase subunit I from Paracidovorax citrulli (strain AAC00-1) (Acidovorax citrulli).